A 352-amino-acid chain; its full sequence is Protein-glutamate methylesterase/protein-glutamine glutaminase 2 (352 aa).

Positions 1–116 (MVVDDSAVVR…KQFLTDSADE (116 aa)) constitute a Response regulatory domain. At aspartate 50 the chain carries 4-aspartylphosphate. Residues 162-352 (AQTTERIVAI…MAREIVTQLQ (191 aa)) form the CheB-type methylesterase domain. Residues serine 174, histidine 200, and aspartate 296 contribute to the active site.

The protein belongs to the CheB family. Post-translationally, phosphorylated by CheA. Phosphorylation of the N-terminal regulatory domain activates the methylesterase activity.

Its subcellular location is the cytoplasm. The catalysed reaction is [protein]-L-glutamate 5-O-methyl ester + H2O = L-glutamyl-[protein] + methanol + H(+). The enzyme catalyses L-glutaminyl-[protein] + H2O = L-glutamyl-[protein] + NH4(+). Functionally, involved in chemotaxis. Part of a chemotaxis signal transduction system that modulates chemotaxis in response to various stimuli. Catalyzes the demethylation of specific methylglutamate residues introduced into the chemoreceptors (methyl-accepting chemotaxis proteins or MCP) by CheR. Also mediates the irreversible deamidation of specific glutamine residues to glutamic acid. The chain is Protein-glutamate methylesterase/protein-glutamine glutaminase 2 from Xanthomonas campestris pv. campestris (strain ATCC 33913 / DSM 3586 / NCPPB 528 / LMG 568 / P 25).